We begin with the raw amino-acid sequence, 286 residues long: Myb family transcription factor PHL7 (286 aa).

The 61-residue stretch at 12–72 folds into the HTH myb-type domain; that stretch reads HASKQRLRWT…HLQKYRLAKY (61 aa). Residues 43 to 68 constitute a DNA-binding region (H-T-H motif); sequence PKGVLRVMGVQGLTIYHVKSHLQKYR. A disordered region spans residues 74 to 97; that stretch reads PDSSSEGKKTDKKESGDMLSGLDG. Over residues 78 to 89 the composition is skewed to basic and acidic residues; sequence SEGKKTDKKESG. The stretch at 104-124 forms a coiled coil; that stretch reads TEALKLQMEVQKRLHEQLEVQ. The LHEQLE signature appears at 117–122; the sequence is LHEQLE. The segment at 152-227 is disordered; it reads LGEPSAPVTG…TGEERLSKKP (76 aa).

Belongs to the MYB-CC family.

The protein localises to the nucleus. This Arabidopsis thaliana (Mouse-ear cress) protein is Myb family transcription factor PHL7.